Here is a 497-residue protein sequence, read N- to C-terminus: uncharacterized protein (497 aa).

Positions 1 to 16 (MSTTTETVTWSQYKPQ) are enriched in polar residues. A disordered region spans residues 1–29 (MSTTTETVTWSQYKPQETQRRLSRSSTIT). Serine 64 is subject to Phosphoserine. Transmembrane regions (helical) follow at residues 86–106 (IALVLLNNLMSEMSLTIALPI), 120–140 (FSGLVIGIPTMISLVCLYPML), 155–175 (FRPLIVSCISQIIGHLLYSLA), 180–200 (WLYLILIGRMCSGVGFTMFLY), 222–242 (LNILAQILGSMAGAFLGGILA), and 258–278 (AGSWFMLFIWIVYSIFLSIFF). Serine 295 carries the post-translational modification Phosphoserine. 6 helical membrane-spanning segments follow: residues 309–329 (FMLCFLSMAAFISIFNVAGYQ), 348–368 (GNFLSLSSLVIAPFVFFSTFL), 377–397 (IMLYGFMMGIVALIVHLVLDA), 407–427 (FVLYSIMQFGFSVGSAPLVSL), 443–463 (VVQVGISIGETVGSICGGAIF), and 468–488 (VGFIAMNLGIALLVFIQLLYL).

The protein localises to the membrane. This is an uncharacterized protein from Schizosaccharomyces pombe (strain 972 / ATCC 24843) (Fission yeast).